The chain runs to 498 residues: ATP synthase subunit beta, chloroplastic (498 aa).

172-179 (GGAGVGKT) provides a ligand contact to ATP.

This sequence belongs to the ATPase alpha/beta chains family. F-type ATPases have 2 components, CF(1) - the catalytic core - and CF(0) - the membrane proton channel. CF(1) has five subunits: alpha(3), beta(3), gamma(1), delta(1), epsilon(1). CF(0) has four main subunits: a(1), b(1), b'(1) and c(9-12).

The protein localises to the plastid. Its subcellular location is the chloroplast thylakoid membrane. The catalysed reaction is ATP + H2O + 4 H(+)(in) = ADP + phosphate + 5 H(+)(out). Produces ATP from ADP in the presence of a proton gradient across the membrane. The catalytic sites are hosted primarily by the beta subunits. The protein is ATP synthase subunit beta, chloroplastic of Whiteheadia bifolia (Elephants ears).